Here is a 160-residue protein sequence, read N- to C-terminus: uncharacterized protein (160 aa).

The 156-residue stretch at 5–160 folds into the N-acetyltransferase domain; the sequence is ISLSFYKPEH…GEQLILHHFL (156 aa).

This is an uncharacterized protein from Bacillus subtilis (strain 168).